Consider the following 577-residue polypeptide: Hemagglutinin-neuraminidase (577 aa).

Residues 1–26 lie on the Intravirion side of the membrane; that stretch reads MDRAVSQVALENDEREAKNTWRLIFR. The chain crosses the membrane as a helical span at residues 27–47; it reads IAILLLTVVTLATSVASLVYS. Over 48-577 the chain is Virion surface; that stretch reads MGASTPSDLV…NDGVREARSG (530 aa). N-linked (GlcNAc...) asparagine; by host glycosylation occurs at asparagine 119. Positions 124 to 152 are important for interaction with fusion/F protein; it reads GAPIHDPDFIGGIGKELIVDDASDVTSFY. 3 cysteine pairs are disulfide-bonded: cysteine 172/cysteine 196, cysteine 186/cysteine 247, and cysteine 238/cysteine 251. The tract at residues 234 to 239 is involved in neuraminidase activity; sequence NRKSCS. N-linked (GlcNAc...) asparagine; by host glycans are attached at residues asparagine 341 and asparagine 433. Intrachain disulfides connect cysteine 344–cysteine 461 and cysteine 455–cysteine 465. Residues asparagine 481 and asparagine 538 are each glycosylated (N-linked (GlcNAc...) asparagine; by host). Cysteine 531 and cysteine 542 are oxidised to a cystine.

It belongs to the paramyxoviruses hemagglutinin-neuraminidase family. As to quaternary structure, homotetramer; composed of disulfide-linked homodimers. Interacts with F protein trimer. Interacts with host CG-1B; this interaction inhibits viral adsorption and replication rather than internalization.

The protein resides in the virion membrane. It localises to the host cell membrane. The enzyme catalyses Hydrolysis of alpha-(2-&gt;3)-, alpha-(2-&gt;6)-, alpha-(2-&gt;8)- glycosidic linkages of terminal sialic acid residues in oligosaccharides, glycoproteins, glycolipids, colominic acid and synthetic substrates.. Functionally, mediates the viral entry into the host cell together with fusion/F protein. Attaches the virus to sialic acid-containing cell receptors and thereby initiates infection. Binding of HN protein to the receptor induces a conformational change that allows the F protein to trigger virion/cell membranes fusion. In terms of biological role, neuraminidase activity ensures the efficient spread of the virus by dissociating the mature virions from the neuraminic acid containing glycoproteins. The sequence is that of Hemagglutinin-neuraminidase (HN) from Gallus gallus (Chicken).